The sequence spans 436 residues: ATP-dependent protease ATPase subunit HslU (436 aa).

Residues I18, 60–65, D249, E314, and R386 contribute to the ATP site; that span reads GVGKTE.

It belongs to the ClpX chaperone family. HslU subfamily. As to quaternary structure, a double ring-shaped homohexamer of HslV is capped on each side by a ring-shaped HslU homohexamer. The assembly of the HslU/HslV complex is dependent on binding of ATP.

It localises to the cytoplasm. In terms of biological role, ATPase subunit of a proteasome-like degradation complex; this subunit has chaperone activity. The binding of ATP and its subsequent hydrolysis by HslU are essential for unfolding of protein substrates subsequently hydrolyzed by HslV. HslU recognizes the N-terminal part of its protein substrates and unfolds these before they are guided to HslV for hydrolysis. In Ruegeria sp. (strain TM1040) (Silicibacter sp.), this protein is ATP-dependent protease ATPase subunit HslU.